A 130-amino-acid polypeptide reads, in one-letter code: Holo-[acyl-carrier-protein] synthase (130 aa).

Mg(2+) contacts are provided by D9 and E58.

This sequence belongs to the P-Pant transferase superfamily. AcpS family. Requires Mg(2+) as cofactor.

Its subcellular location is the cytoplasm. The catalysed reaction is apo-[ACP] + CoA = holo-[ACP] + adenosine 3',5'-bisphosphate + H(+). Transfers the 4'-phosphopantetheine moiety from coenzyme A to a Ser of acyl-carrier-protein. The protein is Holo-[acyl-carrier-protein] synthase of Mycolicibacterium smegmatis (strain ATCC 700084 / mc(2)155) (Mycobacterium smegmatis).